A 1172-amino-acid chain; its full sequence is Lysylphosphatidylglycerol biosynthesis bifunctional protein LysX (1172 aa).

Residues 1–34 (MGLHLTVPGLRRDGRGVQSNSHDTSSKTTADISR) are disordered. A phosphatidylglycerol lysyltransferase region spans residues 1–663 (MGLHLTVPGL…LLHHDGSAPD (663 aa)). Residues 17-31 (VQSNSHDTSSKTTAD) show a composition bias toward polar residues. Transmembrane regions (helical) follow at residues 80–100 (VPAAAGWTVGVIATLSLLASV), 122–142 (FPDTNFAWSFVLALLAAALTA), 146–166 (IAWLVLLANMVLAAVVNAAEI), 177–197 (FGENLGFAVHVVAIVVLVLGY), 214–234 (AVWLAGAVVGIVASWGLVELF), 272–292 (AIFGLFGAFALIGAAIVLFLS), and 612–632 (VIPRVGVASVIAEGFLVLPFS). The tract at residues 664 to 1172 (VSGLRQVGLT…TLPFPLAKPH (509 aa)) is lysine--tRNA ligase. The OB DNA-binding region spans 726–804 (VSVSGRIMRI…SLIVSGWRLI (79 aa)). Mg(2+) contacts are provided by aspartate 1084 and glutamate 1091.

The protein in the N-terminal section; belongs to the LPG synthetase family. It in the C-terminal section; belongs to the class-II aminoacyl-tRNA synthetase family. Mg(2+) serves as cofactor.

The protein resides in the cell membrane. The catalysed reaction is tRNA(Lys) + L-lysine + ATP = L-lysyl-tRNA(Lys) + AMP + diphosphate. It catalyses the reaction L-lysyl-tRNA(Lys) + a 1,2-diacyl-sn-glycero-3-phospho-(1'-sn-glycerol) = a 1,2-diacyl-sn-glycero-3-phospho-1'-(3'-O-L-lysyl)-sn-glycerol + tRNA(Lys). Functionally, catalyzes the production of L-lysyl-tRNA(Lys)transfer and the transfer of a lysyl group from L-lysyl-tRNA(Lys) to membrane-bound phosphatidylglycerol (PG), which produces lysylphosphatidylglycerol (LPG), one of the components of the bacterial membrane with a positive net charge. LPG synthesis contributes to the resistance to cationic antimicrobial peptides (CAMPs) and likely protects M.tuberculosis against the CAMPs produced by competiting microorganisms (bacteriocins). In fact, the modification of anionic phosphatidylglycerol with positively charged L-lysine results in repulsion of the peptides. This is Lysylphosphatidylglycerol biosynthesis bifunctional protein LysX (lysX) from Mycobacterium bovis (strain ATCC BAA-935 / AF2122/97).